The following is a 490-amino-acid chain: Aspartyl/glutamyl-tRNA(Asn/Gln) amidotransferase subunit B (490 aa).

Belongs to the GatB/GatE family. GatB subfamily. As to quaternary structure, heterotrimer of A, B and C subunits.

It catalyses the reaction L-glutamyl-tRNA(Gln) + L-glutamine + ATP + H2O = L-glutaminyl-tRNA(Gln) + L-glutamate + ADP + phosphate + H(+). The catalysed reaction is L-aspartyl-tRNA(Asn) + L-glutamine + ATP + H2O = L-asparaginyl-tRNA(Asn) + L-glutamate + ADP + phosphate + 2 H(+). Functionally, allows the formation of correctly charged Asn-tRNA(Asn) or Gln-tRNA(Gln) through the transamidation of misacylated Asp-tRNA(Asn) or Glu-tRNA(Gln) in organisms which lack either or both of asparaginyl-tRNA or glutaminyl-tRNA synthetases. The reaction takes place in the presence of glutamine and ATP through an activated phospho-Asp-tRNA(Asn) or phospho-Glu-tRNA(Gln). This chain is Aspartyl/glutamyl-tRNA(Asn/Gln) amidotransferase subunit B, found in Synechococcus sp. (strain JA-3-3Ab) (Cyanobacteria bacterium Yellowstone A-Prime).